We begin with the raw amino-acid sequence, 431 residues long: Enolase (431 aa).

Q166 lines the (2R)-2-phosphoglycerate pocket. The active-site Proton donor is E208. Mg(2+)-binding residues include D245, E288, and D315. (2R)-2-phosphoglycerate-binding residues include K340, R369, S370, and K391. Residue K340 is the Proton acceptor of the active site.

This sequence belongs to the enolase family. It depends on Mg(2+) as a cofactor.

The protein localises to the cytoplasm. It localises to the secreted. Its subcellular location is the cell surface. It carries out the reaction (2R)-2-phosphoglycerate = phosphoenolpyruvate + H2O. The protein operates within carbohydrate degradation; glycolysis; pyruvate from D-glyceraldehyde 3-phosphate: step 4/5. In terms of biological role, catalyzes the reversible conversion of 2-phosphoglycerate (2-PG) into phosphoenolpyruvate (PEP). It is essential for the degradation of carbohydrates via glycolysis. The polypeptide is Enolase (Clostridium botulinum (strain Loch Maree / Type A3)).